Here is a 156-residue protein sequence, read N- to C-terminus: 6,7-dimethyl-8-ribityllumazine synthase (156 aa).

Residues F23, 57 to 59 (AYE), and 81 to 83 (AII) each bind 5-amino-6-(D-ribitylamino)uracil. 86 to 87 (GT) is a (2S)-2-hydroxy-3-oxobutyl phosphate binding site. H89 (proton donor) is an active-site residue. Position 114 (F114) interacts with 5-amino-6-(D-ribitylamino)uracil. R128 contacts (2S)-2-hydroxy-3-oxobutyl phosphate.

This sequence belongs to the DMRL synthase family.

It catalyses the reaction (2S)-2-hydroxy-3-oxobutyl phosphate + 5-amino-6-(D-ribitylamino)uracil = 6,7-dimethyl-8-(1-D-ribityl)lumazine + phosphate + 2 H2O + H(+). Its pathway is cofactor biosynthesis; riboflavin biosynthesis; riboflavin from 2-hydroxy-3-oxobutyl phosphate and 5-amino-6-(D-ribitylamino)uracil: step 1/2. Its function is as follows. Catalyzes the formation of 6,7-dimethyl-8-ribityllumazine by condensation of 5-amino-6-(D-ribitylamino)uracil with 3,4-dihydroxy-2-butanone 4-phosphate. This is the penultimate step in the biosynthesis of riboflavin. The sequence is that of 6,7-dimethyl-8-ribityllumazine synthase from Helicobacter pylori (strain P12).